We begin with the raw amino-acid sequence, 168 residues long: Endoribonuclease YbeY (168 aa).

Residues H126, H130, and H136 each contribute to the Zn(2+) site.

It belongs to the endoribonuclease YbeY family. Zn(2+) is required as a cofactor.

It localises to the cytoplasm. Single strand-specific metallo-endoribonuclease involved in late-stage 70S ribosome quality control and in maturation of the 3' terminus of the 16S rRNA. The sequence is that of Endoribonuclease YbeY from Agrobacterium fabrum (strain C58 / ATCC 33970) (Agrobacterium tumefaciens (strain C58)).